The primary structure comprises 202 residues: Recombination protein RecR (202 aa).

The segment at 57-72 (CGVCRTFTEQPCCDIC) adopts a C4-type zinc-finger fold. Residues 81–176 (GQICVVESPS…STTKIAHGVP (96 aa)) form the Toprim domain.

Belongs to the RecR family.

Its function is as follows. May play a role in DNA repair. It seems to be involved in an RecBC-independent recombinational process of DNA repair. It may act with RecF and RecO. This is Recombination protein RecR from Hamiltonella defensa subsp. Acyrthosiphon pisum (strain 5AT).